An 83-amino-acid chain; its full sequence is Omega-agatoxin-Aa4b (83 aa).

An N-terminal signal peptide occupies residues 1–20; sequence MKLCMTLLITAIAVVTFVVA. Residues 21–35 constitute a propeptide that is removed on maturation; it reads TQEESAEFNEVEESR. 4 disulfides stabilise this stretch: cysteine 39–cysteine 55, cysteine 47–cysteine 60, cysteine 54–cysteine 71, and cysteine 62–cysteine 69. Serine 81 bears the D-serine (Ser) mark.

Belongs to the neurotoxin 02 (plectoxin) family. 03 (omega-agtx) subfamily. In terms of processing, the toxin with D-Ser (named omega-aga IVC) is 80-90 fold more potent than that with L-Ser (omega-aga IVB) against Cav2.1/CACNA1A (P-type) channels in rat cerebellar Purkinje neurons and is more resistant to proteases. The epimerization is done by the venom peptide isomerase heterodimer. In terms of tissue distribution, expressed by the venom gland.

It localises to the secreted. Functionally, antagonist of voltage-gated Cav2.1/CACNA1A (P-type) calcium channels. Paralyzes insect by blocking neuromuscular transmission. This Agelenopsis aperta (North American funnel-web spider) protein is Omega-agatoxin-Aa4b.